The chain runs to 249 residues: 4-hydroxy-tetrahydrodipicolinate reductase (249 aa).

NAD(+)-binding positions include aspartate 32, glycine 74 to threonine 76, and serine 99 to phenylalanine 102. Histidine 134 acts as the Proton donor/acceptor in catalysis. Histidine 135 contacts (S)-2,3,4,5-tetrahydrodipicolinate. Residue lysine 138 is the Proton donor of the active site. Glycine 144 to threonine 145 serves as a coordination point for (S)-2,3,4,5-tetrahydrodipicolinate.

This sequence belongs to the DapB family.

The protein localises to the cytoplasm. The catalysed reaction is (S)-2,3,4,5-tetrahydrodipicolinate + NAD(+) + H2O = (2S,4S)-4-hydroxy-2,3,4,5-tetrahydrodipicolinate + NADH + H(+). It catalyses the reaction (S)-2,3,4,5-tetrahydrodipicolinate + NADP(+) + H2O = (2S,4S)-4-hydroxy-2,3,4,5-tetrahydrodipicolinate + NADPH + H(+). It participates in amino-acid biosynthesis; L-lysine biosynthesis via DAP pathway; (S)-tetrahydrodipicolinate from L-aspartate: step 4/4. Its function is as follows. Catalyzes the conversion of 4-hydroxy-tetrahydrodipicolinate (HTPA) to tetrahydrodipicolinate. This chain is 4-hydroxy-tetrahydrodipicolinate reductase, found in Chlorobaculum parvum (strain DSM 263 / NCIMB 8327) (Chlorobium vibrioforme subsp. thiosulfatophilum).